A 441-amino-acid polypeptide reads, in one-letter code: DNA-binding protein (441 aa).

Positions 1 to 18 (MERTPKRAHGFRSTKPVK) are enriched in basic residues. The interval 1-85 (MERTPKRAHG…EESPEAPLSD (85 aa)) is disordered. Acidic residues-rich tracts occupy residues 24 to 33 (MMEEEEEEVE) and 67 to 79 (VDDEENASDEESP). 2 residues coordinate Zn(2+): cysteine 191 and histidine 193. The segment at 204–236 (VELNPSSEAGKRALAEQNGVIEKNRFGRQVVVL) is flexible loop. Zn(2+) is bound by residues cysteine 244, cysteine 262, cysteine 305, cysteine 307, cysteine 359, and cysteine 380. A C-terminal arm, DBP binding region spans residues 426–441 (EVLAPVSPIASDDPFA).

This sequence belongs to the adenoviridae E2A DNA-binding protein family. Homomultimerizes on viral ssDNA bound to pTP. Forms a initiation complex with viral polymerase, pTP and hosts NFIA and POU2F1/OCT1. Interacts with host SRCAP.

It is found in the host nucleus. Plays a role in the elongation phase of viral strand displacement replication by unwinding the template in an ATP-independent fashion, employing its capacity to form multimers. Also enhances the rate of initiation. Released from template upon second strand synthesis. Assembles in complex with viral pTP, viral pol, host NFIA and host POU2F1/OCT1 on viral origin of replication. Covers the whole ssDNA genome during synthesis. The complementary strand synthesis induces its relese from DNA template. May inhibit cellular transcription mediated by the interaction between host SRCAP and CBP. This Fowl adenovirus A serotype 1 (strain CELO / Phelps) (FAdV-1) protein is DNA-binding protein.